A 408-amino-acid polypeptide reads, in one-letter code: Tyrosine--tRNA ligase (408 aa).

Residue tyrosine 35 coordinates L-tyrosine. A 'HIGH' region motif is present at residues 40–49; the sequence is PTADSLHVGH. Positions 168 and 172 each coordinate L-tyrosine. Residues 228 to 232 carry the 'KMSKS' region motif; it reads KMGKT. An ATP-binding site is contributed by lysine 231. The S4 RNA-binding domain occupies 342–407; the sequence is INIIDLLLKT…GKKTYHRVKL (66 aa).

The protein belongs to the class-I aminoacyl-tRNA synthetase family. TyrS type 1 subfamily. As to quaternary structure, homodimer.

The protein resides in the cytoplasm. The catalysed reaction is tRNA(Tyr) + L-tyrosine + ATP = L-tyrosyl-tRNA(Tyr) + AMP + diphosphate + H(+). Its function is as follows. Catalyzes the attachment of tyrosine to tRNA(Tyr) in a two-step reaction: tyrosine is first activated by ATP to form Tyr-AMP and then transferred to the acceptor end of tRNA(Tyr). This Acetivibrio thermocellus (strain ATCC 27405 / DSM 1237 / JCM 9322 / NBRC 103400 / NCIMB 10682 / NRRL B-4536 / VPI 7372) (Clostridium thermocellum) protein is Tyrosine--tRNA ligase.